The following is a 435-amino-acid chain: uncharacterized protein (435 aa).

It belongs to the herpesviridae UL49 family.

This is an uncharacterized protein from Saimiriine herpesvirus 2 (strain 11) (SaHV-2).